The sequence spans 61 residues: Bacteriocin mesentericin Y105 (61 aa).

A signal peptide spans 1 to 24 (MTNMKSVEAYQQLDNQNLKKVVGG). Cysteine 33 and cysteine 38 are joined by a disulfide.

The protein belongs to the bacteriocin class IIA/YGNGV family.

It localises to the secreted. Functionally, bacteriocin active against Listeria monocytogenes. The chain is Bacteriocin mesentericin Y105 (mesY) from Leuconostoc mesenteroides.